A 313-amino-acid polypeptide reads, in one-letter code: uncharacterized protein (313 aa).

Positions 1-313 (MSRNGRNDYD…SSSRSGSSRR (313 aa)) are disordered. Composition is skewed to basic and acidic residues over residues 24-33 (LARDRERDSE), 40-85 (TGER…DVKY), 95-116 (TTREARERNSRTARSEERDELG), and 156-181 (TDERHSDAFRMEHRRLAEERERDEFG). A compositionally biased stretch (basic residues) spans 194–205 (RGRRSNSRRRSS). 2 stretches are compositionally biased toward low complexity: residues 206–266 (NARS…GSKS) and 272–313 (SRSG…SSRR).

It is found in the virion. This is an uncharacterized protein from Acanthamoeba polyphaga mimivirus (APMV).